A 236-amino-acid polypeptide reads, in one-letter code: Endonuclease NucS (236 aa).

The protein belongs to the NucS endonuclease family.

The protein resides in the cytoplasm. Its function is as follows. Cleaves both 3' and 5' ssDNA extremities of branched DNA structures. The polypeptide is Endonuclease NucS (Saccharolobus solfataricus (strain ATCC 35092 / DSM 1617 / JCM 11322 / P2) (Sulfolobus solfataricus)).